The primary structure comprises 248 residues: MAIKVGVLGAKGRVGQTIVAAVNDTDDLELVAEVDHDDDLSLLVDSGAEVVVDFTTPNAVMGNLEFCINNGISAVVGTTGFDEDRLAQVRSWCASNEGVGVLIAPNFAISAVLTMVFARQAARFFESAEVIELHHPNKLDAPSGTAIHTAQGIAEARREAGMAAQPDATEQALDGSRGADVDGIPVHAVRMSGMVAHEAVIFGTQGQTLTIKQDSYDRNSFAPGVLVGIRNIAQHPGLTVGLEHYLDL.

NAD(+) is bound by residues 9-14 (GAKGRV), 77-79 (GTT), and 104-107 (APNF). His134 acts as the Proton donor/acceptor in catalysis. His135 lines the (S)-2,3,4,5-tetrahydrodipicolinate pocket. Lys138 (proton donor) is an active-site residue. 144–145 (GT) contacts (S)-2,3,4,5-tetrahydrodipicolinate.

The protein belongs to the DapB family.

The protein resides in the cytoplasm. It carries out the reaction (S)-2,3,4,5-tetrahydrodipicolinate + NAD(+) + H2O = (2S,4S)-4-hydroxy-2,3,4,5-tetrahydrodipicolinate + NADH + H(+). It catalyses the reaction (S)-2,3,4,5-tetrahydrodipicolinate + NADP(+) + H2O = (2S,4S)-4-hydroxy-2,3,4,5-tetrahydrodipicolinate + NADPH + H(+). Its pathway is amino-acid biosynthesis; L-lysine biosynthesis via DAP pathway; (S)-tetrahydrodipicolinate from L-aspartate: step 4/4. Catalyzes the conversion of 4-hydroxy-tetrahydrodipicolinate (HTPA) to tetrahydrodipicolinate. In Corynebacterium efficiens (strain DSM 44549 / YS-314 / AJ 12310 / JCM 11189 / NBRC 100395), this protein is 4-hydroxy-tetrahydrodipicolinate reductase.